The sequence spans 255 residues: uncharacterized protein (255 aa).

The signal sequence occupies residues 1–22 (MNILSPIIIIIILIVLFYVMRM).

This is an uncharacterized protein from Acanthamoeba polyphaga (Amoeba).